We begin with the raw amino-acid sequence, 296 residues long: Ribosomal protein L11 methyltransferase (296 aa).

The S-adenosyl-L-methionine site is built by Thr-146, Gly-167, Asp-189, and Asn-231.

This sequence belongs to the methyltransferase superfamily. PrmA family.

Its subcellular location is the cytoplasm. It catalyses the reaction L-lysyl-[protein] + 3 S-adenosyl-L-methionine = N(6),N(6),N(6)-trimethyl-L-lysyl-[protein] + 3 S-adenosyl-L-homocysteine + 3 H(+). Functionally, methylates ribosomal protein L11. This Haemophilus influenzae (strain ATCC 51907 / DSM 11121 / KW20 / Rd) protein is Ribosomal protein L11 methyltransferase.